The primary structure comprises 459 residues: Flavin-containing monooxygenase FMO GS-OX5 (459 aa).

Residue 17–22 (GAGAAG) participates in FAD binding. 212 to 217 (GNFASG) serves as a coordination point for NADP(+).

The protein belongs to the FMO family.

The enzyme catalyses a (Z)-omega-(methylsulfanyl)-N-sulfo-alkylhydroximate S-glucoside + NADPH + O2 + H(+) = a (Z)-omega-(methylsulfinyl)-alkyl-glucosinolate + NADP(+) + H2O. In terms of biological role, catalyzes the conversion of methylthioalkyl glucosinolates into methylsulfinylalkyl glucosinolates. Specific for 8-methylthiooctyl (8-MTO) glucosinolates. The sequence is that of Flavin-containing monooxygenase FMO GS-OX5 (FMOGS-OX5) from Arabidopsis thaliana (Mouse-ear cress).